The sequence spans 355 residues: D-alanine--D-alanine ligase (355 aa).

One can recognise an ATP-grasp domain in the interval 143 to 350; the sequence is KIIFSNLKIP…IEQLVAKLVD (208 aa). Residue 178 to 233 participates in ATP binding; it reads LKKLNFPVFVKPSNSGSSLGISKVINKSEIIPALEKARGIDPSILIEEGLEVREIE. Residues Asp-303, Glu-317, and Asn-319 each contribute to the Mg(2+) site.

It belongs to the D-alanine--D-alanine ligase family. The cofactor is Mg(2+). Mn(2+) serves as cofactor.

It localises to the cytoplasm. The enzyme catalyses 2 D-alanine + ATP = D-alanyl-D-alanine + ADP + phosphate + H(+). Its pathway is cell wall biogenesis; peptidoglycan biosynthesis. Cell wall formation. The polypeptide is D-alanine--D-alanine ligase (Prochlorococcus marinus (strain AS9601)).